The primary structure comprises 788 residues: Ribonucleoside-diphosphate reductase subunit alpha (788 aa).

One can recognise an ATP-cone domain in the interval 2-92; it reads ITVVKRNGRI…LYDLYHKVSG (91 aa). ATP-binding positions include lysine 6, 12–18, and threonine 52; that span reads EPLDITK. Threonine 200 serves as a coordination point for GDP. A disulfide bond links cysteine 216 and cysteine 497. DTTP contacts are provided by residues 223 to 225 and arginine 253; that span reads DNI. Asparagine 424 contacts GDP. Asparagine 424 (proton acceptor) is an active-site residue. Cysteine 426 serves as the catalytic Cysteine radical intermediate. Residues glutamate 428 and 661–663 contribute to the GDP site; that span reads SSI. Catalysis depends on glutamate 428, which acts as the Proton acceptor.

The protein belongs to the ribonucleoside diphosphate reductase large chain family. Tetramer of two alpha and two beta subunits.

It catalyses the reaction a 2'-deoxyribonucleoside 5'-diphosphate + [thioredoxin]-disulfide + H2O = a ribonucleoside 5'-diphosphate + [thioredoxin]-dithiol. Its activity is regulated as follows. Under complex allosteric control mediated by deoxynucleoside triphosphates and ATP binding to separate specificity and activation sites on the alpha subunit. The type of nucleotide bound at the specificity site determines substrate preference. It seems probable that ATP makes the enzyme reduce CDP and UDP, dGTP favors ADP reduction and dTTP favors GDP reduction. Stimulated by ATP and inhibited by dATP binding to the activity site. Functionally, provides the precursors necessary for DNA synthesis. Catalyzes the biosynthesis of deoxyribonucleotides from the corresponding ribonucleotides. The sequence is that of Ribonucleoside-diphosphate reductase subunit alpha (nrdA) from Helicobacter pylori (strain ATCC 700392 / 26695) (Campylobacter pylori).